The sequence spans 363 residues: Ribosomal RNA large subunit methyltransferase M (363 aa).

Residues serine 190, 223–226, aspartate 242, aspartate 262, and aspartate 280 each bind S-adenosyl-L-methionine; that span reads CPGG. The Proton acceptor role is filled by lysine 309.

The protein belongs to the class I-like SAM-binding methyltransferase superfamily. RNA methyltransferase RlmE family. RlmM subfamily. Monomer.

Its subcellular location is the cytoplasm. It carries out the reaction cytidine(2498) in 23S rRNA + S-adenosyl-L-methionine = 2'-O-methylcytidine(2498) in 23S rRNA + S-adenosyl-L-homocysteine + H(+). Catalyzes the 2'-O-methylation at nucleotide C2498 in 23S rRNA. This is Ribosomal RNA large subunit methyltransferase M from Actinobacillus pleuropneumoniae serotype 5b (strain L20).